The following is a 433-amino-acid chain: Polygalacturonase ADPG2 (433 aa).

The N-terminal stretch at 1–24 (MARCTNLVTVFLLWALLMFSWCKA) is a signal peptide. 5 PbH1 repeats span residues 223–249 (CSNV…HITN), 250–271 (TQNI…SIES), 273–293 (SQNV…SIGS), 303–324 (VSGV…RIKT), and 332–353 (ASNI…IIDQ). The Proton donor role is filled by Asp-264. His-287 is an active-site residue.

Belongs to the glycosyl hydrolase 28 family. As to expression, expressed in roots and in the abscission zone of the sepals, petals and stamens of flowers, at the base of cauline leaves and in the basal cell of trichomes from senescing leaves. Found at the site of lateral root emergence, in the dehiscence zone of anthers and maturing siliques. Also expressed early in anther development, at the time of microspore separation. Expressed in germinating seeds, at the point at which the radicle broke through the seed coat. Not expressed at the junction between the seed and the funiculus or in the dehiscence zone of anthers or pods.

Its subcellular location is the secreted. The protein resides in the cell wall. It carries out the reaction (1,4-alpha-D-galacturonosyl)n+m + H2O = (1,4-alpha-D-galacturonosyl)n + (1,4-alpha-D-galacturonosyl)m.. Its function is as follows. Polygalacturonase involved in cell separation in the final stages of pod shatter, in anther dehiscence and in floral organ abscission. The polypeptide is Polygalacturonase ADPG2 (ADPG2) (Arabidopsis thaliana (Mouse-ear cress)).